Here is a 555-residue protein sequence, read N- to C-terminus: Disabled homolog 1 (555 aa).

The tract at residues 1–26 (MSTETELQVAVKTSAKKDSRKKGQDR) is disordered. The segment covering 15 to 26 (AKKDSRKKGQDR) has biased composition (basic and acidic residues). The PID domain maps to 36-189 (KGEGVRYKAK…CEQAVYQTIL (154 aa)). Residues tyrosine 198, tyrosine 220, and tyrosine 232 each carry the phosphotyrosine modification. Disordered regions lie at residues 386–409 (PLAT…PRQK) and 469–555 (LTPV…QDGS). Over residues 391-403 (PGTNDSARSSPQS) the composition is skewed to polar residues. Low complexity-rich tracts occupy residues 470–479 (TPVTSTTPST) and 490–501 (SSPSKSSASHVS). Serine 491 carries the post-translational modification Phosphoserine; by CDK5. Residues 504–513 (TADDIFEEGF) are compositionally biased toward acidic residues.

In terms of assembly, associates with the SH2 domains of SRC, FYN and ABL. Interacts (phosphorylated on tyrosine residues) with CRK and CRKL (via respective SH2 domain). Interacts with SIAH1, LRP8 and VLDLR. Interacts with LRP1. Interacts with APLP1 (via NPXY motif). Interacts with DAB2IP. Interacts with ZSWIM8. Phosphorylated by FYN on Tyr-198 and Tyr-220 upon reelin induction in embryonic neurons. Also phosphorylated on Ser-491 independently of reelin signaling. In terms of processing, ubiquitinated by various cullin-5-RING E3 ubiquitin-protein ligase complexes (ECS complexes) following ligand-binding and phosphorylation, leading to its degradation. Ubiquitinated by the ECS(SOCS7) complex in the cortical plate of the developing cerebral cortex following ligand-binding and phosphorylation by FYN, leading to its degradation by the proteasome. Recognized by ZSWIM8 through a disorder targets misorder mechanism that eliminates misfolded DAB1 via ubiquitination and proteasomal degradation.

Its subcellular location is the cytoplasm. Its function is as follows. Signaling adapter of the reelin-mediated signaling pathway, which regulates the migration and differentiation of postmitotic neurons during brain development. Mediates intracellular transduction of Reelin signaling following reelin (RELN)-binding to its receptor: acts by docking proteins through its phosphotyrosine residues and PID domain. This is Disabled homolog 1 (Dab1) from Rattus norvegicus (Rat).